Here is a 143-residue protein sequence, read N- to C-terminus: Spore coat protein P (143 aa).

One can recognise a sHSP domain in the interval 34–143; it reads FFDSEASTFV…VETVAFNKGL (110 aa).

The protein belongs to the small heat shock protein (HSP20) family.

In Bacillus subtilis (strain 168), this protein is Spore coat protein P (cotP).